The chain runs to 388 residues: Serine/threonine-protein phosphatase sitA (388 aa).

Residues Asp67 and His69 each contribute to the Mn(2+) site. The disordered stretch occupies residues 86-146 (PDGSEAEAPK…SQRDRSSSSG (61 aa)). The Mn(2+) site is built by Asp161 and Asn193. Residue His194 is the Proton donor of the active site. Residues His243 and His317 each coordinate Mn(2+).

Belongs to the PPP phosphatase family. PP-6 (PP-V) subfamily. The cofactor is Mn(2+).

It carries out the reaction O-phospho-L-threonyl-[protein] + H2O = L-threonyl-[protein] + phosphate. In terms of biological role, protein phosphatase that acts as a modulator of pkcA/mpkA activity involved in the cell wall integrity pathway. Plays an important role in regulation of adhesion, cell wall integrity, biofilm formation, and virulence. This Aspergillus fumigatus (strain ATCC MYA-4609 / CBS 101355 / FGSC A1100 / Af293) (Neosartorya fumigata) protein is Serine/threonine-protein phosphatase sitA.